We begin with the raw amino-acid sequence, 226 residues long: Ribonuclease 3 (226 aa).

In terms of domain architecture, RNase III spans 4 to 127; sequence LEEFEKKLGY…VMGAIYLEKG (124 aa). Glutamate 40 lines the Mg(2+) pocket. Aspartate 44 is an active-site residue. Mg(2+) contacts are provided by asparagine 113 and glutamate 116. Glutamate 116 is an active-site residue. The DRBM domain maps to 154 to 223; sequence DFKTALQEFT…AKEALKILKA (70 aa).

This sequence belongs to the ribonuclease III family. As to quaternary structure, homodimer. Mg(2+) serves as cofactor.

Its subcellular location is the cytoplasm. The enzyme catalyses Endonucleolytic cleavage to 5'-phosphomonoester.. Its function is as follows. Digests double-stranded RNA. Involved in the processing of primary rRNA transcript to yield the immediate precursors to the large and small rRNAs (23S and 16S). Processes some mRNAs, and tRNAs when they are encoded in the rRNA operon. Processes pre-crRNA and tracrRNA of type II CRISPR loci if present in the organism. The protein is Ribonuclease 3 of Nitratiruptor sp. (strain SB155-2).